Reading from the N-terminus, the 33-residue chain is Antimicrobial peptide MBP-1 (33 aa).

As to expression, predominantly in the embryo portion of the kernel.

It is found in the secreted. Its function is as follows. Inhibitor of both bacterial and fungal growth in vitro. The polypeptide is Antimicrobial peptide MBP-1 (Zea mays (Maize)).